Reading from the N-terminus, the 322-residue chain is Tetraacyldisaccharide 4'-kinase (322 aa).

54-61 lines the ATP pocket; that stretch reads SVGGTGKT.

This sequence belongs to the LpxK family.

It catalyses the reaction a lipid A disaccharide + ATP = a lipid IVA + ADP + H(+). It participates in glycolipid biosynthesis; lipid IV(A) biosynthesis; lipid IV(A) from (3R)-3-hydroxytetradecanoyl-[acyl-carrier-protein] and UDP-N-acetyl-alpha-D-glucosamine: step 6/6. Transfers the gamma-phosphate of ATP to the 4'-position of a tetraacyldisaccharide 1-phosphate intermediate (termed DS-1-P) to form tetraacyldisaccharide 1,4'-bis-phosphate (lipid IVA). This Francisella tularensis subsp. tularensis (strain FSC 198) protein is Tetraacyldisaccharide 4'-kinase.